A 130-amino-acid chain; its full sequence is Inner membrane protein YqjF (130 aa).

Topologically, residues 1-5 are cytoplasmic; it reads MKKLE. A helical transmembrane segment spans residues 6–26; it reads DVGVLVARILMPILFITAGWG. At 27–45 the chain is on the periplasmic side; sequence KITGYAGTQQYMEAMGVPG. The chain crosses the membrane as a helical span at residues 46 to 66; sequence FMLPLVILLEFGGGLAILFGF. Over 67–70 the chain is Cytoplasmic; it reads LTRT. Residues 71-91 traverse the membrane as a helical segment; that stretch reads TALFTAGFTLLTAFLFHSNFA. The Periplasmic portion of the chain corresponds to 92–101; sequence EGVNSLMFMK. The helical transmembrane segment at 102-122 threads the bilayer; sequence NLTISGGFLLLAITGPGAYSI. Residues 123–130 are Cytoplasmic-facing; the sequence is DRLLNKKW.

Belongs to the DoxX family.

Its subcellular location is the cell inner membrane. This is Inner membrane protein YqjF (yqjF) from Escherichia coli (strain K12).